Here is a 461-residue protein sequence, read N- to C-terminus: Early growth response factor homolog 1 (461 aa).

Disordered regions lie at residues 1–25 (MALH…PSLN), 96–152 (TLMP…ELTL), and 232–308 (DVLH…YSSL). 4 stretches are compositionally biased toward polar residues: residues 96–105 (TLMPAPSSSY), 129–144 (GSNS…GNSK), 249–265 (LGSS…SRPS), and 272–291 (QRTN…SMSP). Low complexity predominate over residues 299-308 (YSNSASYSSL). 3 C2H2-type zinc fingers span residues 374–398 (YKCP…IRIH), 404–426 (FQCR…VRTH), and 432–454 (FSCD…TKVH).

This sequence belongs to the EGR C2H2-type zinc-finger protein family. In terms of tissue distribution, expressed in sheath cells and distal tip cells of the somatic gonad, as well as in the intestine and sperm (at protein level). Expression not observed in oocytes (at protein level).

It is found in the nucleus. The protein localises to the cytoplasm. Its subcellular location is the perinuclear region. Its function is as follows. Sequence-specific DNA-binding transcription factor. Plays a role in oocyte development, acting cell-autonomously in the somatic gonad. Involved in negative regulation of oocyte MAPK activation and inhibits oocyte maturation and ovulation. This is Early growth response factor homolog 1 from Caenorhabditis elegans.